We begin with the raw amino-acid sequence, 176 residues long: GTP-dependent dephospho-CoA kinase (176 aa).

GTP contacts are provided by Asp47, Val48, Asp66, and Glu125.

It belongs to the GTP-dependent DPCK family.

It carries out the reaction 3'-dephospho-CoA + GTP = GDP + CoA + H(+). It functions in the pathway cofactor biosynthesis; coenzyme A biosynthesis. Catalyzes the GTP-dependent phosphorylation of the 3'-hydroxyl group of dephosphocoenzyme A to form coenzyme A (CoA). This chain is GTP-dependent dephospho-CoA kinase, found in Methanocella arvoryzae (strain DSM 22066 / NBRC 105507 / MRE50).